We begin with the raw amino-acid sequence, 589 residues long: Cysteine/serine-rich nuclear protein 1 (589 aa).

Disordered regions lie at residues 1-62 (MTGL…RDFC) and 309-388 (FREL…GVDD). Composition is skewed to low complexity over residues 17 to 41 (SSVSSSSSSSGCQSRSCSPSSSVSR) and 345 to 368 (DNSCSSDMTDSSTASSSASGTSEA).

Belongs to the AXUD1 family. In terms of tissue distribution, ubiquitous. Most abundantly expressed in lung, placenta, skeletal muscle, pancreas and leukocyte. Frequently down-regulated in lung, kidney, liver and colon cancers compared with their corresponding normal tissues.

Its subcellular location is the nucleus. Binds to the consensus sequence 5'-AGAGTG-3' and has transcriptional activator activity. May have a tumor-suppressor function. May play a role in apoptosis. In Homo sapiens (Human), this protein is Cysteine/serine-rich nuclear protein 1 (CSRNP1).